We begin with the raw amino-acid sequence, 400 residues long: Phosphoribosylamine--glycine ligase (400 aa).

In terms of domain architecture, ATP-grasp spans 99 to 303; it reads KRFMKKYGIR…FVNAVLEGYR (205 aa). 125–186 is a binding site for ATP; it reads IKKFSPPYVI…DEFLAGNELS (62 aa). Mg(2+) is bound by residues Glu273 and Asn275.

The protein belongs to the GARS family. Requires Mg(2+) as cofactor. Mn(2+) is required as a cofactor.

The enzyme catalyses 5-phospho-beta-D-ribosylamine + glycine + ATP = N(1)-(5-phospho-beta-D-ribosyl)glycinamide + ADP + phosphate + H(+). The protein operates within purine metabolism; IMP biosynthesis via de novo pathway; N(1)-(5-phospho-D-ribosyl)glycinamide from 5-phospho-alpha-D-ribose 1-diphosphate: step 2/2. The chain is Phosphoribosylamine--glycine ligase from Thermotoga maritima (strain ATCC 43589 / DSM 3109 / JCM 10099 / NBRC 100826 / MSB8).